Reading from the N-terminus, the 150-residue chain is Interferon antagonist OPG027 (150 aa).

Belongs to the orthopoxvirus OPG027 family.

Inhibits antiviral activity induced by type I interferons. Does not block signal transduction of IFN, but is important to counteract the host antiviral state induced by a pre-treatment with IFN. The protein is Interferon antagonist OPG027 (OPG027) of Cynomys gunnisoni (Gunnison's prairie dog).